The following is a 244-amino-acid chain: Transcriptional activator protein PhzR (244 aa).

One can recognise an HTH luxR-type domain in the interval 177 to 242 (AFNTDVEFSE…QAVSYAVALG (66 aa)). Positions 201–220 (SEEIGVIMGVCTDTVNYHHR) form a DNA-binding region, H-T-H motif.

It belongs to the autoinducer-regulated transcriptional regulatory protein family.

Its function is as follows. Positive regulator of phenazine antibiotic production. May activate the phenazine biosynthetic genes by binding to a DNA sequence upstream of them, or to an intermediate gene which, in turn, interacts with them. The chain is Transcriptional activator protein PhzR (phzR) from Pseudomonas fluorescens.